Here is a 1564-residue protein sequence, read N- to C-terminus: NACHT domain- and WD repeat-containing protein 1 (1564 aa).

In terms of domain architecture, NACHT spans 335–661; that stretch reads TPLVLFGPPG…LLAIAHRQLV (327 aa). An ATP-binding site is contributed by 341–348; sequence GPPGIGKT. WD repeat units follow at residues 866–905, 908–947, 956–994, 998–1037, 1044–1082, 1083–1121, 1126–1165, 1167–1207, 1212–1251, 1253–1290, 1291–1327, 1338–1376, 1380–1418, and 1425–1462; these read GCHK…VIHM, GHTG…EKFT, PAEP…PVFH, DASD…LQGK, KEET…LLEK, LPDA…RRFM, EHED…TLLD, LEGV…RSRV, LDRT…EQDS, DTSS…RQDV, ICIP…VLDI, GPRY…LYEC, KAFP…WDLQ, and EMSY…VWSV.

As to quaternary structure, may interact with HSP90AA1, HSP90AB1 and BAG2. Expressed at highest levels in prostate, followed by testis, retina, trachea and optic nerve. Also detected in brain, epididymis, lung, vagina and pituitary. In the prostate, tends to be up-regulated during malignant progression compared to normal epithelium (at protein level).

The protein resides in the cytoplasm. The protein localises to the cytosol. May play a role in the control of androgen receptor (AR) protein steady-state levels. This is NACHT domain- and WD repeat-containing protein 1 (NWD1) from Homo sapiens (Human).